Consider the following 398-residue polypeptide: 1-deoxy-D-xylulose 5-phosphate reductoisomerase (398 aa).

Residues T10, G11, S12, I13, K37, N38, and N124 each coordinate NADPH. K125 is a binding site for 1-deoxy-D-xylulose 5-phosphate. Position 126 (E126) interacts with NADPH. D150 contacts Mn(2+). 4 residues coordinate 1-deoxy-D-xylulose 5-phosphate: S151, E152, S186, and H209. Position 152 (E152) interacts with Mn(2+). G215 provides a ligand contact to NADPH. The 1-deoxy-D-xylulose 5-phosphate site is built by S222, N227, K228, and E231. A Mn(2+)-binding site is contributed by E231.

It belongs to the DXR family. In terms of assembly, homodimer. Requires Mg(2+) as cofactor. The cofactor is Mn(2+).

It carries out the reaction 2-C-methyl-D-erythritol 4-phosphate + NADP(+) = 1-deoxy-D-xylulose 5-phosphate + NADPH + H(+). The protein operates within isoprenoid biosynthesis; isopentenyl diphosphate biosynthesis via DXP pathway; isopentenyl diphosphate from 1-deoxy-D-xylulose 5-phosphate: step 1/6. Functionally, catalyzes the NADPH-dependent rearrangement and reduction of 1-deoxy-D-xylulose-5-phosphate (DXP) to 2-C-methyl-D-erythritol 4-phosphate (MEP). The polypeptide is 1-deoxy-D-xylulose 5-phosphate reductoisomerase (Buchnera aphidicola subsp. Acyrthosiphon pisum (strain APS) (Acyrthosiphon pisum symbiotic bacterium)).